A 509-amino-acid chain; its full sequence is O-acetyltransferase anaAT (509 aa).

Belongs to the fumigaclavine B O-acetyltransferase family. In terms of assembly, monomer.

The catalysed reaction is (2R,3S,11R)-aszonalenin + acetyl-CoA = (2R,3S,11R)-acetylaszonalenin + CoA. Its pathway is alkaloid biosynthesis. O-acetyltransferase; part of the gene cluster that mediates the biosynthesis of the prenylated pyrroloindoline diketopiperazine acetylaszonalenin. The first step in the pathway is the formation of (R)-benzodiazepinedione by condensation of tryptophan and anthranilic acid catalyzed by the non-ribosomal peptide synthetase anaPS. The prenyltransferase anaPT then converts (R)-benzodiazepinedione to aszonalenin in the presence of dimethylallyl diphosphate (DMAPP) via C3-prenylation. The last step in the biosynthesis of acetylaszonalenin via acetylation of aszonalenin at position N1 catalyzed by anaAT. This Neosartorya fischeri (strain ATCC 1020 / DSM 3700 / CBS 544.65 / FGSC A1164 / JCM 1740 / NRRL 181 / WB 181) (Aspergillus fischerianus) protein is O-acetyltransferase anaAT.